The following is a 354-amino-acid chain: Fructose-1,6-bisphosphatase class 1 (354 aa).

4 residues coordinate Mg(2+): Glu-112, Asp-134, Leu-136, and Asp-137. Substrate contacts are provided by residues 137 to 140 (DGSS), Asn-229, Tyr-257, and Lys-287. Residue Glu-293 coordinates Mg(2+).

Belongs to the FBPase class 1 family. Homotetramer. Mg(2+) serves as cofactor.

Its subcellular location is the cytoplasm. The catalysed reaction is beta-D-fructose 1,6-bisphosphate + H2O = beta-D-fructose 6-phosphate + phosphate. Its pathway is carbohydrate biosynthesis; Calvin cycle. This is Fructose-1,6-bisphosphatase class 1 from Trichodesmium erythraeum (strain IMS101).